A 362-amino-acid chain; its full sequence is Homoserine O-acetyltransferase FUB5 (362 aa).

In terms of domain architecture, AB hydrolase-1 spans 12-335; it reads NVMIICHALS…VSDDGHDAFL (324 aa). The active-site Nucleophile is the Ser110. Positions 195–232 are disordered; that stretch reads RFGRDTGNKKKTQQQDSKTIPNNGTPIHSQGGADETPV. The span at 208–222 shows a compositional bias: polar residues; that stretch reads QQDSKTIPNNGTPIH. Active-site residues include Asp302 and His331.

It belongs to the AB hydrolase superfamily. MetX family.

The enzyme catalyses L-homoserine + acetyl-CoA = O-acetyl-L-homoserine + CoA. It participates in mycotoxin biosynthesis. Its function is as follows. Homoserine O-acetyltransferase; part of the gene cluster that mediates the biosynthesis of fusaric acid, a mycotoxin with low to moderate toxicity to animals and humans, but with high phytotoxic properties. L-aspartate is suggested as fusaric acid amino acid precursor that is activated and further processed to O-acetyl-L-homoserine by cluster enzymes aspartate kinase FUB3 and homoserine O-acetyltransferase FUB5, as well as enzymes of the primary metabolism. The polyketide synthase (PKS) FUB1 generates the triketide trans-2-hexenal which is presumptively released by the hydrolase FUB4 and linked to the NRPS-bound amino acid precursor by NAD(P)-dependent dehydrogenase FUB6. FUB1, FUB4, and the non-canonical NRPS Fub8 may form an enzyme complex. Further processing of the NRPS-bound intermediate might be carried out by FUB6 and the O-acetylhomoserine FUB7, enabling a spontaneous electrocyclization to close the carbon backbone of fusaric acid. Dihydrofusaric acid is likely to be released via reduction by the thioester reductase (TR) domain of FUB8 whereupon the final oxidation to fusaric acid may (also) be performed by the FMN-dependent dehydrogenase FUB9. The protein is Homoserine O-acetyltransferase FUB5 of Fusarium oxysporum f. sp. lycopersici (strain 4287 / CBS 123668 / FGSC 9935 / NRRL 34936) (Fusarium vascular wilt of tomato).